We begin with the raw amino-acid sequence, 427 residues long: Glutamate-1-semialdehyde 2,1-aminomutase (427 aa).

At K265 the chain carries N6-(pyridoxal phosphate)lysine.

It belongs to the class-III pyridoxal-phosphate-dependent aminotransferase family. HemL subfamily. As to quaternary structure, homodimer. Requires pyridoxal 5'-phosphate as cofactor.

It localises to the cytoplasm. The enzyme catalyses (S)-4-amino-5-oxopentanoate = 5-aminolevulinate. Its pathway is porphyrin-containing compound metabolism; protoporphyrin-IX biosynthesis; 5-aminolevulinate from L-glutamyl-tRNA(Glu): step 2/2. In Burkholderia mallei (strain NCTC 10229), this protein is Glutamate-1-semialdehyde 2,1-aminomutase.